We begin with the raw amino-acid sequence, 486 residues long: tRNA-2-methylthio-N(6)-dimethylallyladenosine synthase (486 aa).

One can recognise an MTTase N-terminal domain in the interval 35 to 151 (RNLYVESYGC…LPRLLATVDS (117 aa)). [4Fe-4S] cluster is bound by residues Cys44, Cys80, Cys114, Cys189, Cys193, and Cys196. A Radical SAM core domain is found at 175–419 (NSNGVSAFIS…IDKQRQHSFE (245 aa)). In terms of domain architecture, TRAM spans 422–485 (LKDIGKVYQV…TGTLLGEICT (64 aa)).

It belongs to the methylthiotransferase family. MiaB subfamily. As to quaternary structure, monomer. It depends on [4Fe-4S] cluster as a cofactor.

It is found in the cytoplasm. It catalyses the reaction N(6)-dimethylallyladenosine(37) in tRNA + (sulfur carrier)-SH + AH2 + 2 S-adenosyl-L-methionine = 2-methylsulfanyl-N(6)-dimethylallyladenosine(37) in tRNA + (sulfur carrier)-H + 5'-deoxyadenosine + L-methionine + A + S-adenosyl-L-homocysteine + 2 H(+). In terms of biological role, catalyzes the methylthiolation of N6-(dimethylallyl)adenosine (i(6)A), leading to the formation of 2-methylthio-N6-(dimethylallyl)adenosine (ms(2)i(6)A) at position 37 in tRNAs that read codons beginning with uridine. This is tRNA-2-methylthio-N(6)-dimethylallyladenosine synthase from Amoebophilus asiaticus (strain 5a2).